Consider the following 293-residue polypeptide: B1-hordein (293 aa).

The first 19 residues, 1–19 (MKTFLIFALLAIAATSTIA), serve as a signal peptide directing secretion. A disordered region spans residues 20–90 (QQQPFPQQPI…PPFWQQKPFP (71 aa)). A compositionally biased stretch (pro residues) spans 25–81 (PQQPIPQQPQPYPQQPQPYPQQPFPPQQPFPQQPVPQQPQPYPQQPFPPQQPFPQQP).

This sequence belongs to the gliadin/glutenin family. Developing endosperm.

Sulfur-rich seed storage protein. The protein is B1-hordein of Hordeum vulgare (Barley).